A 186-amino-acid polypeptide reads, in one-letter code: Ribosome-recycling factor (186 aa).

It belongs to the RRF family.

Its subcellular location is the cytoplasm. In terms of biological role, responsible for the release of ribosomes from messenger RNA at the termination of protein biosynthesis. May increase the efficiency of translation by recycling ribosomes from one round of translation to another. The sequence is that of Ribosome-recycling factor from Brucella abortus (strain S19).